We begin with the raw amino-acid sequence, 472 residues long: Na(+)/H(+) antiporter NhaA (472 aa).

10 helical membrane-spanning segments follow: residues 24 to 44, 66 to 86, 108 to 128, 156 to 176, 196 to 216, 234 to 254, 290 to 310, 312 to 332, 361 to 381, and 392 to 412; these read ISGL…NLPA, LPIG…TVGL, LCAV…TALF, GWAV…ALFA, LLAI…YWFI, VPWI…FEAG, PFSA…VHFE, MSPL…LVVG, MIPA…IASL, and ARFG…VLLS. The interval 422 to 472 is disordered; that stretch reads AAAAAADEEDDESIDGDGIGQPSHTTEPTTPTEHPGTLADGTASVEIDFRH. Over residues 427–436 the composition is skewed to acidic residues; sequence ADEEDDESID. A compositionally biased stretch (low complexity) spans 445 to 456; the sequence is HTTEPTTPTEHP.

The protein belongs to the NhaA Na(+)/H(+) (TC 2.A.33) antiporter family.

It localises to the cell membrane. It carries out the reaction Na(+)(in) + 2 H(+)(out) = Na(+)(out) + 2 H(+)(in). In terms of biological role, na(+)/H(+) antiporter that extrudes sodium in exchange for external protons. This Bifidobacterium longum (strain NCC 2705) protein is Na(+)/H(+) antiporter NhaA.